Consider the following 150-residue polypeptide: C-type natriuretic peptide (150 aa).

Positions 1 to 31 (MSISSSSSSSSSSSSCLLLISLMLLAASCQG) are cleaved as a signal peptide. Positions 32 to 127 (RPDLQHRNHK…RKMFRGRTKK (96 aa)) are excised as a propeptide. Positions 60-73 (GAADGSSGEEAALS) are enriched in low complexity. A disordered region spans residues 60 to 109 (GAADGSSGEEAALSQRAPPSIRALHPRSGRLGLRDDLEAEPPAENKPRRR). A disulfide bridge connects residues cysteine 134 and cysteine 150.

Belongs to the natriuretic peptide family. As to expression, expressed in brain, but not in atrium or ventricle.

It localises to the secreted. Hormone which plays a role in endochondral ossification through regulation of cartilaginous growth plate chondrocytes proliferation and differentiation. May also be vasoactive and natriuretic. This is C-type natriuretic peptide (cnp) from Acipenser transmontanus (White sturgeon).